Reading from the N-terminus, the 84-residue chain is Small ribosomal subunit protein bS20 (84 aa).

The segment covering 62 to 72 (KNKARRLKSRA) has biased composition (basic residues). Residues 62–84 (KNKARRLKSRAARWSNSATAASR) form a disordered region. The segment covering 75-84 (WSNSATAASR) has biased composition (polar residues).

It belongs to the bacterial ribosomal protein bS20 family.

In terms of biological role, binds directly to 16S ribosomal RNA. This chain is Small ribosomal subunit protein bS20, found in Mycoplasmoides gallisepticum (strain R(low / passage 15 / clone 2)) (Mycoplasma gallisepticum).